Here is a 196-residue protein sequence, read N- to C-terminus: Probable inactive nicotinamidase At3g16190 (196 aa).

It belongs to the isochorismatase family.

Its function is as follows. Does not possess nicotinamidase activity in vitro. In Arabidopsis thaliana (Mouse-ear cress), this protein is Probable inactive nicotinamidase At3g16190.